The following is a 128-amino-acid chain: Z-ring associated protein G (128 aa).

A helical membrane pass occupies residues 7–27 (EIWFSISIAFLIGTLCGVLVM). Residues 37-75 (QIQLKSELASAEAKIEEQKQQLERHFEQSANLLENLAED) adopt a coiled-coil conformation. Positions 105–128 (NHANGDEDNQPRDYSDGSSGLLKS) are disordered. Positions 107-119 (ANGDEDNQPRDYS) are enriched in basic and acidic residues.

Belongs to the ZapG family. In terms of assembly, homotetramer. In solution, is primarily monomeric but forms small amounts of stable tetramer and hexadecamer. The crystal structure of the cytosolic region shows a coiled-coil tetramer in the asymmetric unit that is very likely to be a physiologically relevant assembly of the protein.

The protein localises to the cell inner membrane. Involved in cell division, cell envelope biogenesis and cell shape maintenance. The chain is Z-ring associated protein G from Haemophilus ducreyi (strain 35000HP / ATCC 700724).